The chain runs to 162 residues: ATP synthase subunit b (162 aa).

Residues 8–28 form a helical membrane-spanning segment; sequence LTGIIQLLNFLILLFVLYKFL.

Belongs to the ATPase B chain family. In terms of assembly, F-type ATPases have 2 components, F(1) - the catalytic core - and F(0) - the membrane proton channel. F(1) has five subunits: alpha(3), beta(3), gamma(1), delta(1), epsilon(1). F(0) has three main subunits: a(1), b(2) and c(10-14). The alpha and beta chains form an alternating ring which encloses part of the gamma chain. F(1) is attached to F(0) by a central stalk formed by the gamma and epsilon chains, while a peripheral stalk is formed by the delta and b chains.

It is found in the cell inner membrane. Functionally, f(1)F(0) ATP synthase produces ATP from ADP in the presence of a proton or sodium gradient. F-type ATPases consist of two structural domains, F(1) containing the extramembraneous catalytic core and F(0) containing the membrane proton channel, linked together by a central stalk and a peripheral stalk. During catalysis, ATP synthesis in the catalytic domain of F(1) is coupled via a rotary mechanism of the central stalk subunits to proton translocation. Component of the F(0) channel, it forms part of the peripheral stalk, linking F(1) to F(0). This chain is ATP synthase subunit b, found in Pseudothermotoga lettingae (strain ATCC BAA-301 / DSM 14385 / NBRC 107922 / TMO) (Thermotoga lettingae).